The sequence spans 573 residues: 2-isopropylmalate synthase (573 aa).

The Pyruvate carboxyltransferase domain maps to 37 to 314; it reads PRWLSTDLRD…DPQIDFSNID (278 aa). 4 residues coordinate Mg(2+): D46, H253, H255, and N289. A regulatory domain region spans residues 456–573; sequence NPRNPWGRIQ…VVSAVNRAAR (118 aa).

Belongs to the alpha-IPM synthase/homocitrate synthase family. LeuA type 2 subfamily. Homodimer. Mg(2+) is required as a cofactor.

Its subcellular location is the cytoplasm. The catalysed reaction is 3-methyl-2-oxobutanoate + acetyl-CoA + H2O = (2S)-2-isopropylmalate + CoA + H(+). It functions in the pathway amino-acid biosynthesis; L-leucine biosynthesis; L-leucine from 3-methyl-2-oxobutanoate: step 1/4. Its function is as follows. Catalyzes the condensation of the acetyl group of acetyl-CoA with 3-methyl-2-oxobutanoate (2-ketoisovalerate) to form 3-carboxy-3-hydroxy-4-methylpentanoate (2-isopropylmalate). The protein is 2-isopropylmalate synthase of Streptomyces avermitilis (strain ATCC 31267 / DSM 46492 / JCM 5070 / NBRC 14893 / NCIMB 12804 / NRRL 8165 / MA-4680).